The chain runs to 159 residues: 2-C-methyl-D-erythritol 2,4-cyclodiphosphate synthase (159 aa).

The a divalent metal cation site is built by D10 and H12. 4-CDP-2-C-methyl-D-erythritol 2-phosphate contacts are provided by residues D10–H12 and H36–S37. H44 serves as a coordination point for a divalent metal cation. 4-CDP-2-C-methyl-D-erythritol 2-phosphate contacts are provided by residues D58–G60, F63–D67, A102–A108, T134–E137, F141, and R144.

The protein belongs to the IspF family. In terms of assembly, homotrimer. A divalent metal cation serves as cofactor.

It carries out the reaction 4-CDP-2-C-methyl-D-erythritol 2-phosphate = 2-C-methyl-D-erythritol 2,4-cyclic diphosphate + CMP. The protein operates within isoprenoid biosynthesis; isopentenyl diphosphate biosynthesis via DXP pathway; isopentenyl diphosphate from 1-deoxy-D-xylulose 5-phosphate: step 4/6. Functionally, involved in the biosynthesis of isopentenyl diphosphate (IPP) and dimethylallyl diphosphate (DMAPP), two major building blocks of isoprenoid compounds. Catalyzes the conversion of 4-diphosphocytidyl-2-C-methyl-D-erythritol 2-phosphate (CDP-ME2P) to 2-C-methyl-D-erythritol 2,4-cyclodiphosphate (ME-CPP) with a corresponding release of cytidine 5-monophosphate (CMP). The polypeptide is 2-C-methyl-D-erythritol 2,4-cyclodiphosphate synthase (Shewanella piezotolerans (strain WP3 / JCM 13877)).